Consider the following 72-residue polypeptide: Translation initiation factor IF-1 (72 aa).

An S1-like domain is found at 1–72; the sequence is MAKEDCIEMQ…SKARIIFRAR (72 aa).

It belongs to the IF-1 family. Component of the 30S ribosomal translation pre-initiation complex which assembles on the 30S ribosome in the order IF-2 and IF-3, IF-1 and N-formylmethionyl-tRNA(fMet); mRNA recruitment can occur at any time during PIC assembly.

It is found in the cytoplasm. In terms of biological role, one of the essential components for the initiation of protein synthesis. Stabilizes the binding of IF-2 and IF-3 on the 30S subunit to which N-formylmethionyl-tRNA(fMet) subsequently binds. Helps modulate mRNA selection, yielding the 30S pre-initiation complex (PIC). Upon addition of the 50S ribosomal subunit IF-1, IF-2 and IF-3 are released leaving the mature 70S translation initiation complex. The polypeptide is Translation initiation factor IF-1 (Actinobacillus pleuropneumoniae serotype 5b (strain L20)).